The following is a 595-amino-acid chain: Adenine deaminase 2 (595 aa).

Belongs to the metallo-dependent hydrolases superfamily. Adenine deaminase family. Mn(2+) serves as cofactor.

It carries out the reaction adenine + H2O + H(+) = hypoxanthine + NH4(+). This is Adenine deaminase 2 from Rhizobium johnstonii (strain DSM 114642 / LMG 32736 / 3841) (Rhizobium leguminosarum bv. viciae).